Reading from the N-terminus, the 542-residue chain is Chaperonin GroEL (542 aa).

Residues 29-32 (TMGP), lysine 50, 86-90 (DGTTT), glycine 414, 477-479 (NAA), and aspartate 493 contribute to the ATP site.

This sequence belongs to the chaperonin (HSP60) family. In terms of assembly, forms a cylinder of 14 subunits composed of two heptameric rings stacked back-to-back. Interacts with the co-chaperonin GroES.

Its subcellular location is the cytoplasm. The catalysed reaction is ATP + H2O + a folded polypeptide = ADP + phosphate + an unfolded polypeptide.. In terms of biological role, together with its co-chaperonin GroES, plays an essential role in assisting protein folding. The GroEL-GroES system forms a nano-cage that allows encapsulation of the non-native substrate proteins and provides a physical environment optimized to promote and accelerate protein folding. The polypeptide is Chaperonin GroEL (Sulfurovum sp. (strain NBC37-1)).